We begin with the raw amino-acid sequence, 398 residues long: MSQKLILVLNCGSSSLKGAVLDNGSGEVLLSCLAEKLNLPDAYITFKVNGEKHKVDLSAHPDHTGAVEALMEELKAHGLDSRIGAIGHRVVSGGELYSESILVDDEVIAGIEKCIPLAPLHNPAHLLGLRAAQSIFKGLPNVVVFDTSFHQTMPEVAYKYAVPQELYEKYGLRRYGAHGTSYRFVADETARFLGKDKKDLRMVIAHLGNGASITAVANGESRDTSMGLTPLEGLVMGTRSGDIDPSVFGFLAENANMTIAQITEMLNKKSGLLGISGLSNDCRTIEEEAAKGHKGAKLALDMFIYRLAKYIGSMAVAAGGLDALVFTGGIGENSDIIRERVIGYLGFLGLNIDQEANLKARFGNAGVITTADSKAVAVVIPTNEELMIAHDTARLSGL.

Asparagine 10 lines the Mg(2+) pocket. Lysine 17 is a binding site for ATP. Arginine 89 contacts substrate. The active-site Proton donor/acceptor is aspartate 146. ATP-binding positions include 206–210, 281–283, and 329–333; these read HLGNG, DCR, and GIGEN. Glutamate 384 is a Mg(2+) binding site.

The protein belongs to the acetokinase family. Homodimer. Mg(2+) is required as a cofactor. Requires Mn(2+) as cofactor.

The protein resides in the cytoplasm. It carries out the reaction acetate + ATP = acetyl phosphate + ADP. It participates in metabolic intermediate biosynthesis; acetyl-CoA biosynthesis; acetyl-CoA from acetate: step 1/2. In terms of biological role, catalyzes the formation of acetyl phosphate from acetate and ATP. Can also catalyze the reverse reaction. This chain is Acetate kinase 1, found in Neisseria meningitidis serogroup B (strain ATCC BAA-335 / MC58).